A 205-amino-acid polypeptide reads, in one-letter code: Pyridoxal 5'-phosphate synthase subunit PdxT (205 aa).

Residue 53 to 55 (GES) participates in L-glutamine binding. C85 (nucleophile) is an active-site residue. L-glutamine-binding positions include R112 and 140–141 (IR). Catalysis depends on charge relay system residues H176 and E178.

The protein belongs to the glutaminase PdxT/SNO family. In terms of assembly, in the presence of PdxS, forms a dodecamer of heterodimers. Only shows activity in the heterodimer.

The catalysed reaction is aldehydo-D-ribose 5-phosphate + D-glyceraldehyde 3-phosphate + L-glutamine = pyridoxal 5'-phosphate + L-glutamate + phosphate + 3 H2O + H(+). The enzyme catalyses L-glutamine + H2O = L-glutamate + NH4(+). It functions in the pathway cofactor biosynthesis; pyridoxal 5'-phosphate biosynthesis. Catalyzes the hydrolysis of glutamine to glutamate and ammonia as part of the biosynthesis of pyridoxal 5'-phosphate. The resulting ammonia molecule is channeled to the active site of PdxS. The chain is Pyridoxal 5'-phosphate synthase subunit PdxT from Haloquadratum walsbyi (strain DSM 16790 / HBSQ001).